The sequence spans 486 residues: Aspartyl/glutamyl-tRNA(Asn/Gln) amidotransferase subunit B (486 aa).

Belongs to the GatB/GatE family. GatB subfamily. In terms of assembly, heterotrimer of A, B and C subunits.

It catalyses the reaction L-glutamyl-tRNA(Gln) + L-glutamine + ATP + H2O = L-glutaminyl-tRNA(Gln) + L-glutamate + ADP + phosphate + H(+). It carries out the reaction L-aspartyl-tRNA(Asn) + L-glutamine + ATP + H2O = L-asparaginyl-tRNA(Asn) + L-glutamate + ADP + phosphate + 2 H(+). Functionally, allows the formation of correctly charged Asn-tRNA(Asn) or Gln-tRNA(Gln) through the transamidation of misacylated Asp-tRNA(Asn) or Glu-tRNA(Gln) in organisms which lack either or both of asparaginyl-tRNA or glutaminyl-tRNA synthetases. The reaction takes place in the presence of glutamine and ATP through an activated phospho-Asp-tRNA(Asn) or phospho-Glu-tRNA(Gln). This Orientia tsutsugamushi (strain Boryong) (Rickettsia tsutsugamushi) protein is Aspartyl/glutamyl-tRNA(Asn/Gln) amidotransferase subunit B.